A 205-amino-acid chain; its full sequence is GTP cyclohydrolase-2 (205 aa).

49-53 (RLHSE) provides a ligand contact to GTP. 3 residues coordinate Zn(2+): Cys-54, Cys-65, and Cys-67. Residues Gln-70, 92–94 (EGR), and Thr-114 contribute to the GTP site. The Proton acceptor role is filled by Asp-126. Arg-128 (nucleophile) is an active-site residue. The GTP site is built by Thr-149 and Lys-154.

The protein belongs to the GTP cyclohydrolase II family. Requires Zn(2+) as cofactor.

It carries out the reaction GTP + 4 H2O = 2,5-diamino-6-hydroxy-4-(5-phosphoribosylamino)-pyrimidine + formate + 2 phosphate + 3 H(+). Its pathway is cofactor biosynthesis; riboflavin biosynthesis; 5-amino-6-(D-ribitylamino)uracil from GTP: step 1/4. Its function is as follows. Catalyzes the conversion of GTP to 2,5-diamino-6-ribosylamino-4(3H)-pyrimidinone 5'-phosphate (DARP), formate and pyrophosphate. This is GTP cyclohydrolase-2 from Pseudomonas aeruginosa (strain LESB58).